Consider the following 213-residue polypeptide: N-(5'-phosphoribosyl)anthranilate isomerase (213 aa).

Belongs to the TrpF family.

The enzyme catalyses N-(5-phospho-beta-D-ribosyl)anthranilate = 1-(2-carboxyphenylamino)-1-deoxy-D-ribulose 5-phosphate. Its pathway is amino-acid biosynthesis; L-tryptophan biosynthesis; L-tryptophan from chorismate: step 3/5. In Methylibium petroleiphilum (strain ATCC BAA-1232 / LMG 22953 / PM1), this protein is N-(5'-phosphoribosyl)anthranilate isomerase.